We begin with the raw amino-acid sequence, 290 residues long: UPF0761 membrane protein YihY (290 aa).

Topologically, residues 1 to 43 are cytoplasmic; sequence MLKTVHQKAGRHTRPVRAWLKLLWQRIDEDNMTTLAGNLAYVS. The helical transmembrane segment at 44-64 threads the bilayer; the sequence is LLSLVPLIAVVFALFAAFPMF. The Periplasmic segment spans residues 65–103; the sequence is SDVSIQLRHFIFANFMPATGDVIQRYIEQFVANSNKMTA. A helical membrane pass occupies residues 104-124; the sequence is VGACGLIVTALLLMYAIDSAL. Over 125-139 the chain is Cytoplasmic; sequence NTIWRSKRTRPKVYS. A helical transmembrane segment spans residues 140-160; that stretch reads FAVYWMILTLGPLLAGVSLAI. Residues 161–179 lie on the Periplasmic side of the membrane; it reads SSYLLSLRWASDLNTVIDN. The helical transmembrane segment at 180 to 200 threads the bilayer; it reads VLHILPLLLSWISFWLLYSIV. The Cytoplasmic portion of the chain corresponds to 201-209; it reads PTTRVPNRD. A helical membrane pass occupies residues 210–230; sequence ALVGAFVAALLFEAGKKGFAL. Over 231 to 243 the chain is Periplasmic; that stretch reads YITMFPSYQLIYG. Residues 244–264 form a helical membrane-spanning segment; that stretch reads VLAVIPILFVWVYWTWCIVLL. The Cytoplasmic segment spans residues 265 to 290; sequence GAEITVTLGEYRKLKQAAEQEEADQP.

This sequence belongs to the UPF0761 family.

The protein localises to the cell inner membrane. In Salmonella typhimurium (strain LT2 / SGSC1412 / ATCC 700720), this protein is UPF0761 membrane protein YihY.